Here is a 333-residue protein sequence, read N- to C-terminus: Ornithine carbamoyltransferase (333 aa).

Carbamoyl phosphate-binding positions include Ser-57–Thr-60, Arg-108, and His-135–Gln-138. Residues Asn-168, Asp-232, and Ser-236–Met-237 contribute to the L-ornithine site. Carbamoyl phosphate-binding positions include Cys-274 to Leu-275 and Arg-319.

Belongs to the aspartate/ornithine carbamoyltransferase superfamily. OTCase family.

Its subcellular location is the cytoplasm. It carries out the reaction carbamoyl phosphate + L-ornithine = L-citrulline + phosphate + H(+). Its pathway is amino-acid degradation; L-arginine degradation via ADI pathway; carbamoyl phosphate from L-arginine: step 2/2. Functionally, reversibly catalyzes the transfer of the carbamoyl group from carbamoyl phosphate (CP) to the N(epsilon) atom of ornithine (ORN) to produce L-citrulline. This is Ornithine carbamoyltransferase from Pediococcus pentosaceus (strain ATCC 25745 / CCUG 21536 / LMG 10740 / 183-1w).